The following is a 296-amino-acid chain: MAHVLCNRARLVSYLPGFCSLVKRVINPRAFSTAGSSGSDESHVATAPPDICSRTVWPDETMGPFGPQDQRFQLPGNIGFDCHLNGTASQKKSQAHKTLPDVLAEPLSTERHEFVMAQYVNEFQDSNAPVEQEISSAETYFESARVECAIQTCPELLRRDFESLFPEVANSKLMILTVTQKTEHDMTVWSEEVEVEREALLEKFINGAKEICYALRAEGYWADFIDPSSGLAFFGPYTNNTLFETDERYRHLGFSVDDLGCCKVIRHGLWGTHVVVGSIFTNATADSHIMRKLSGD.

The N-terminal 38 residues, 1–38 (MAHVLCNRARLVSYLPGFCSLVKRVINPRAFSTAGSSG), are a transit peptide targeting the mitochondrion. Lys-203 is modified (N6-acetyllysine).

Heterodimer with MMACHC. Forms a multiprotein complex with MMACHC, MTR and MTRR.

The protein localises to the cytoplasm. It is found in the mitochondrion. Involved in cobalamin metabolism and trafficking. Plays a role in regulating the biosynthesis and the proportion of two coenzymes, methylcob(III)alamin (MeCbl) and 5'-deoxyadenosylcobalamin (AdoCbl). Promotes oxidation of cob(II)alamin bound to MMACHC. The processing of cobalamin in the cytosol occurs in a multiprotein complex composed of at least MMACHC, MMADHC, MTRR (methionine synthase reductase) and MTR (methionine synthase) which may contribute to shuttle safely and efficiently cobalamin towards MTR in order to produce methionine. The sequence is that of Cobalamin trafficking protein CblD (Mmadhc) from Rattus norvegicus (Rat).